The chain runs to 220 residues: Ribose-5-phosphate isomerase A (220 aa).

Substrate-binding positions include 28-31 (TGST), 81-84 (DGAD), and 94-97 (KGGG). Glutamate 103 functions as the Proton acceptor in the catalytic mechanism. Lysine 121 is a binding site for substrate.

This sequence belongs to the ribose 5-phosphate isomerase family. Homodimer.

It carries out the reaction aldehydo-D-ribose 5-phosphate = D-ribulose 5-phosphate. It participates in carbohydrate degradation; pentose phosphate pathway; D-ribose 5-phosphate from D-ribulose 5-phosphate (non-oxidative stage): step 1/1. Catalyzes the reversible conversion of ribose-5-phosphate to ribulose 5-phosphate. The sequence is that of Ribose-5-phosphate isomerase A from Hydrogenovibrio crunogenus (strain DSM 25203 / XCL-2) (Thiomicrospira crunogena).